Here is a 371-residue protein sequence, read N- to C-terminus: Protein NDRG2 (371 aa).

The disordered stretch occupies residues 1–21; sequence MAELQEVQITEEKPLLPGQTP. N-acetylalanine is present on Ala2. Thr20 carries the phosphothreonine modification. A phosphoserine mark is found at Ser326 and Ser328. At Thr330 the chain carries Phosphothreonine. Ser332 carries the phosphoserine modification. Position 334 is a phosphothreonine (Thr334). The segment at 334–371 is disordered; that stretch reads TSAASVDGNRSRSRTLSQSSESGTLSSGPPGHTMEVSC. A phosphoserine mark is found at Ser335, Ser338, and Ser344. A compositionally biased stretch (low complexity) spans 347-361; the sequence is RTLSQSSESGTLSSG. Thr348 is modified (phosphothreonine). Phosphoserine is present on residues Ser350, Ser352, Ser353, and Ser355. Thr357 carries the post-translational modification Phosphothreonine. Ser370 carries the post-translational modification Phosphoserine.

Belongs to the NDRG family. In terms of assembly, interacts with CTNNB1.

The protein localises to the cytoplasm. It localises to the perinuclear region. The protein resides in the cell projection. It is found in the growth cone. In terms of biological role, contributes to the regulation of the Wnt signaling pathway. Down-regulates CTNNB1-mediated transcriptional activation of target genes, such as CCND1, and may thereby act as tumor suppressor. May be involved in dendritic cell and neuron differentiation. The sequence is that of Protein NDRG2 (NDRG2) from Pongo abelii (Sumatran orangutan).